The primary structure comprises 2758 residues: MFLKQQQQQPVEADFVDCQSTPRAGGPVAGTTFYTVPVRTFGVELGEYWYPGGSRGPVAFVETEKLATFPTRFCASDYAGSSHSSPQPTAVGVSRERLDRGRFLGKHGEMPTLPLDSIASCGVHRIPEYRWIGKWAEQVDDGASAVNIRRLFEASSPIIGLDARFPGDGDTAERFYDFLLAGRSARSEIPPERYNADAFWHPDGNRSGATRARAAHFLKGSISAFDAPLFSITPTEAAAMDPQQRGILESVYRALENGKFPLAVVGGCNLIISPEFALLLDAAGVLGPDGKSYSFDHRGNGYSRGEGFGVVVLKRLPDALRDGDVIRAVIRNSGSNSDGRSPGITQPTKAAQAALIKQVYANAGLDPSVTRFFEAHGTGTAVGDPIEASAIAEVFATHRSHKSPLWVGALKSNIGHLEGAAGVAAVIKGVLTLENGVIPPNTWFERKNPKILDSWNLQFPTEPVVWPQTGLRRMSINSFGVGGSNAHVVMDDALHFLQSYGLVGNHRTVALPRLPGSSSSRRVVSQADSGVEFTDSDSELKTPDGTHSPDSTAEHSKDMNFDSSCTNTDTLQTTDTNKQPKLSAIACPEVLSSSLSRLAVSDEEGRQSQIFVFSSSDKDGVSRVVNELADYLAKKAKQYKPNMRDQSKFLRDLSYTLACKRTRHAWRSFVVAKTQSSLSALLQAKSLATRAASEPQLAFVFTGQGAQWPTMGRGLMAYPTFRESLHEAEEYMTQTLRCPWSLTYELCKEAGASRINDAEFSQPVCTALQVALVDLLRTWKVRPHAVVGHSSGEIAAAYAAGQLSRQSSWRIAYYRGKLATKLIRSLRRRENSQDAHVKKTGMVAVGLDKEQTLAAISRVDSLVGEGSLEIACMNSQESHTVSGDMAKLDALVEVLKSENVFARKLSVGIGYHSRHMLPIADEYVRLIGDIGSDLPPSQGQSLPRYFSSLEGSEITLDRLQSPDYWANNLTSPVRFHEAVELMLRADLGCNSQGESSTVGKKTVTDLLEIGPHAALRGPIRSIVKQVHQTAEWKIGYATVLKRGDGAIENALGAAGSLFCRGFDVDLAAVNQHQVESSRQSIALNGGNNVLMLTDLPGYPFNHKKEYWAESRLSRNYRFRSAPRHELLGAPVPDWDKNDAVWRNYIRITENPWVEHHKVSGEILYPAAGMLVMAIEASRQLVDKDQQVAGFRFKDVSFHLALLIPTNDVGVETRFRLRSVSAGKLAGWSEFQLSTSENDDWKEHCRGFVRTEYSQTGSNTESDSSRLVHSQCEQEIVQAKKSCTSMVHADKVYRKLSNIGLDFGTTFRTLKDVKFDGTSRILARAESQVSHIKKSMPAEYLHSHLVHPSMLDAVLQANLIPIALGSSSRDSLVPVFASDFWVSAATKEGVDFHNSAYLISSHAKLTPGTADAEAALFGIHADTGEPLVTSSGLVFKTIPNTASSGQRNHHRPALNLDWKPDPNYLTEEDALRMFGAPAITQSSDEVSDDIGDCEILCLLYIRRFLASLDDTVVEKLDWHHLRYVSWMRHVVQTTTVKPAVDNISVMEARIAAAGTPEGKLIMAVGRNLANILVTGDVDPLDVIFGDKVAENVYREGLGSRRCYAQMCAYLDALAHVNPSMKILEVGGGTGGATGSIMETLMANGARRFDHYDFTDISPSFFEHAKEAFKQTAEHMSFRVLNIEKEPTDQGYDGQSYNLVLAANVLHATKSMERTLANVRKLLKPGGKLIVFELTNPAVLLGGFCFGVLPGWWLSDEADREWGPLMVVDTWRAYLERAGFSGVDAVFDDFPDAAHQTSSILVSTALPVADASKPVTAVDNLTRYCVLMGERPSVFQRQVADALLPALARTGSVETSTITASAGRDLKGSCCIVLSELDSPTLIDMTTDVFVALQGVLNSCRRIIWLSRSGDDIVAAPDRELVTGLARVVRAEREPPFSFVTVSFAEAERSETIVDKTLQVLDRGQETAENSFRVFNGVVHVPRLVEAGYLTDHISAEANPTSTQATTQEVKLGADPRDFVAQVQSTGLLQGAGTADVCFSEDHSRQQPLADDEVEFKVMACGVGAHDVAAEDSAAGESSLSDMGIQMAGFVTRLGSTAASKFSVGDRVTGISLEGAIKTRARTQAGLLAKISDKLAWNQAAQIPMAYFTACAIIQYMGVGDSDDILLVHRAAASAAGLAAVQVARSNGAKIFATVANAQERTALQGVGGLLTDQILDLDQNTTLSTIVKSKTGNRGVSMIIDSLPQSDVDHAASLVDCLAPFGRFVSLGDGPMPGISSRRNICLERFNGAELMALDYEKAQRIFLRAARFILDEPLAANAQVPVYKFSEVSEAFAQLGKGEDAVVLEPHDEDVVKVVTSQQSHTDFTSRFDPGASYMVVGGLGGLGRSVSRWMASKGAKSLVLVSRKGAVTPEAQVLVAELQDLGVKVTTPACDATDKMALRRALDQCVAHMPPIKGVIQCSMVLKDKRFFEMSLEEWNTAIRPKVDVSVNLHDALDTASLDFFIMLSSTVGLTGSVEQANYAAGGTFQDAFARSLAASQTASSGPVAVSLDLPVILDVGFVAEKPELMDQLRAAGWAYMEEEEFHAALGYHCFQRRQLDLPTSVLRAQVAPRLWLAQDTADEGTEPPAWVRDPLFSHLRPQSSETTGNGAAGGEAGKKEMKHTALLAAATSAAEAQAVVLDALLAKLSRVLSVELSDLDPACPLSRYGVDSLVAVSLRAWIGKELGAELSVFEMTDKPSIRALAAAVAGRSRLVSKALS.

The 340-residue stretch at 153–492 (EASSPIIGLD…GSNAHVVMDD (340 aa)) folds into the Ketosynthase family 3 (KS3) domain. Residues 512–576 (PRLPGSSSSR…NTDTLQTTDT (65 aa)) are disordered. A compositionally biased stretch (low complexity) spans 566-576 (TNTDTLQTTDT). The interval 700–1044 (VFTGQGAQWP…GYATVLKRGD (345 aa)) is malonyl-CoA:ACP transacylase (MAT) domain. Ser790 acts as the For malonyltransferase activity in catalysis. The interval 1124 to 1255 (HELLGAPVPD…GFVRTEYSQT (132 aa)) is N-terminal hotdog fold. Residues 1124 to 1442 (HELLGAPVPD…VFKTIPNTAS (319 aa)) form a dehydratase (DH) domain region. The PKS/mFAS DH domain occupies 1124 to 1443 (HELLGAPVPD…FKTIPNTASS (320 aa)). Catalysis depends on His1156, which acts as the Proton acceptor; for dehydratase activity. Residues 1283-1443 (TSMVHADKVY…FKTIPNTASS (161 aa)) form a C-terminal hotdog fold region. Asp1351 (proton donor; for dehydratase activity) is an active-site residue. The tract at residues 1622–1727 (LEVGGGTGGA…RKLLKPGGKL (106 aa)) is methyltransferase (CMet) domain. The tract at residues 2031–2344 (GTADVCFSED…LGKGEDAVVL (314 aa)) is enoyl reductase (ER) domain. The tract at residues 2372-2553 (ASYMVVGGLG…PVAVSLDLPV (182 aa)) is ketoreductase (KR) domain. A Carrier domain is found at 2673 to 2750 (EAQAVVLDAL…ALAAAVAGRS (78 aa)). Ser2710 carries the O-(pantetheine 4'-phosphoryl)serine modification.

Its function is as follows. Highly reducing polyketide synthase; part of the gene cluster that mediates the biosynthesis of nectriapyrone and its analogs phomopyrone A, acropyrone and zaepyrone. The nectriapyrone biosynthetic gene cluster consists of two genes, the highly reducing polyketide synthase NEC1 that produces a demethylated analog of nectriapyrone from one unit of acetyl-CoA and one unit of malonyl-CoA; and the O-methyltransferase NEC2 that further methylates the NEC1 product to yield nectriapyrone. Nectriapyrone is further hydrolyzed to nectriapyrone D, also known as gulypyrone B, by an unidentified hydrolase localized outside the nectriapyrone cluster. This is Highly reducing polyketide synthase NEC1 from Pyricularia oryzae (strain 70-15 / ATCC MYA-4617 / FGSC 8958) (Rice blast fungus).